Reading from the N-terminus, the 414-residue chain is Gamma-glutamyl phosphate reductase (414 aa).

It belongs to the gamma-glutamyl phosphate reductase family.

The protein localises to the cytoplasm. It catalyses the reaction L-glutamate 5-semialdehyde + phosphate + NADP(+) = L-glutamyl 5-phosphate + NADPH + H(+). It functions in the pathway amino-acid biosynthesis; L-proline biosynthesis; L-glutamate 5-semialdehyde from L-glutamate: step 2/2. Its function is as follows. Catalyzes the NADPH-dependent reduction of L-glutamate 5-phosphate into L-glutamate 5-semialdehyde and phosphate. The product spontaneously undergoes cyclization to form 1-pyrroline-5-carboxylate. This is Gamma-glutamyl phosphate reductase from Xanthomonas campestris pv. campestris (strain ATCC 33913 / DSM 3586 / NCPPB 528 / LMG 568 / P 25).